We begin with the raw amino-acid sequence, 61 residues long: Potassium channel toxin alpha-KTx 18.1 (61 aa).

Positions 1-24 (MRFTGIILILISMTLIDSFFEMKV) are cleaved as a signal peptide. Cystine bridges form between Cys33–Cys52, Cys38–Cys57, and Cys42–Cys59.

As to expression, expressed by the venom gland.

The protein resides in the secreted. Functionally, reversible blocker of both Kv1.3/KCNA3 potassium channels (high affinity) and Shaker B (mammalian Kv1.1 analog) potassium channels (very low affinity). In Tityus obscurus (Amazonian scorpion), this protein is Potassium channel toxin alpha-KTx 18.1.